The sequence spans 314 residues: 4-hydroxy-3-methylbut-2-enyl diphosphate reductase (314 aa).

Cysteine 12 is a [4Fe-4S] cluster binding site. Histidine 41 and histidine 74 together coordinate (2E)-4-hydroxy-3-methylbut-2-enyl diphosphate. Positions 41 and 74 each coordinate dimethylallyl diphosphate. Isopentenyl diphosphate-binding residues include histidine 41 and histidine 74. Cysteine 96 is a binding site for [4Fe-4S] cluster. Histidine 124 is a (2E)-4-hydroxy-3-methylbut-2-enyl diphosphate binding site. Dimethylallyl diphosphate is bound at residue histidine 124. Histidine 124 serves as a coordination point for isopentenyl diphosphate. Glutamate 126 (proton donor) is an active-site residue. Threonine 167 contributes to the (2E)-4-hydroxy-3-methylbut-2-enyl diphosphate binding site. Cysteine 197 serves as a coordination point for [4Fe-4S] cluster. Residues serine 225, serine 226, asparagine 227, and serine 269 each contribute to the (2E)-4-hydroxy-3-methylbut-2-enyl diphosphate site. 4 residues coordinate dimethylallyl diphosphate: serine 225, serine 226, asparagine 227, and serine 269. Isopentenyl diphosphate contacts are provided by serine 225, serine 226, asparagine 227, and serine 269.

The protein belongs to the IspH family. [4Fe-4S] cluster is required as a cofactor.

It catalyses the reaction isopentenyl diphosphate + 2 oxidized [2Fe-2S]-[ferredoxin] + H2O = (2E)-4-hydroxy-3-methylbut-2-enyl diphosphate + 2 reduced [2Fe-2S]-[ferredoxin] + 2 H(+). It carries out the reaction dimethylallyl diphosphate + 2 oxidized [2Fe-2S]-[ferredoxin] + H2O = (2E)-4-hydroxy-3-methylbut-2-enyl diphosphate + 2 reduced [2Fe-2S]-[ferredoxin] + 2 H(+). It participates in isoprenoid biosynthesis; dimethylallyl diphosphate biosynthesis; dimethylallyl diphosphate from (2E)-4-hydroxy-3-methylbutenyl diphosphate: step 1/1. Its pathway is isoprenoid biosynthesis; isopentenyl diphosphate biosynthesis via DXP pathway; isopentenyl diphosphate from 1-deoxy-D-xylulose 5-phosphate: step 6/6. Its function is as follows. Catalyzes the conversion of 1-hydroxy-2-methyl-2-(E)-butenyl 4-diphosphate (HMBPP) into a mixture of isopentenyl diphosphate (IPP) and dimethylallyl diphosphate (DMAPP). Acts in the terminal step of the DOXP/MEP pathway for isoprenoid precursor biosynthesis. This is 4-hydroxy-3-methylbut-2-enyl diphosphate reductase from Aliivibrio fischeri (strain ATCC 700601 / ES114) (Vibrio fischeri).